The following is a 274-amino-acid chain: GCN5-related N-acetyltransferase 7, chloroplastic (274 aa).

Residues 1–65 (MAFLCSSLPS…STFVISESVS (65 aa)) constitute a chloroplast transit peptide. An N-acetyltransferase domain is found at 75–267 (LRVRTFNELN…QRLLLWLALP (193 aa)). Residues 189-191 (VCV), 197-202 (RNGVGY), 228-230 (NEA), and Y235 each bind acetyl-CoA. Y235 acts as the Proton donor in catalysis.

This sequence belongs to the acetyltransferase family. GNAT subfamily. In terms of assembly, oligomer. Autoacetylated. Expressed in green tissues.

It localises to the plastid. It is found in the chloroplast. It carries out the reaction an N-terminal L-alpha-aminoacyl-[protein] + acetyl-CoA = N-terminal N(alpha)-acetyl-L-alpha-aminoacyl-[protein] + CoA + H(+). The enzyme catalyses L-lysyl-[protein] + acetyl-CoA = N(6)-acetyl-L-lysyl-[protein] + CoA + H(+). It catalyses the reaction N-terminal L-alanyl-[protein] + acetyl-CoA = N-terminal N(alpha)-acetyl-L-alanyl-[protein] + CoA + H(+). The catalysed reaction is N-terminal L-seryl-[protein] + acetyl-CoA = N-terminal N(alpha)-acetyl-L-seryl-[protein] + CoA + H(+). It carries out the reaction N-terminal L-threonyl-[protein] + acetyl-CoA = N-terminal N(alpha)-acetyl-L-threonyl-[protein] + CoA + H(+). The enzyme catalyses N-terminal L-methionyl-[protein] + acetyl-CoA = N-terminal N(alpha)-acetyl-L-methionyl-[protein] + CoA + H(+). It catalyses the reaction N-terminal L-prolyl-[protein] + acetyl-CoA = N-terminal N(alpha)-acetyl-L-prolyl-[protein] + CoA + H(+). The catalysed reaction is N-terminal L-valyl-[protein] + acetyl-CoA = N-terminal N(alpha)-acetyl-L-valyl-[protein] + CoA + H(+). In terms of biological role, protein acetyltransferase with dual specificity triggering both N-alpha-acetylation (NTA), with a large spectrum of modified N-termini, including methionine, alanine, serine, threonine and to a lower extent valine and proline as substrates, and epsilon-lysine acetylation (KA). In Arabidopsis thaliana (Mouse-ear cress), this protein is GCN5-related N-acetyltransferase 7, chloroplastic.